The primary structure comprises 504 residues: MTEQKYIVALDQGTTSSRAVILDHDANIVSVSQREFTQIYPEAGWVEHDPLEIYATQSSTLVETLAKAGIRSDQIAGIGITNQRETTIVWNKETGKPVYNAIVWQCRRTADTCEKLKEAGLEEYIRENTGLVVDPYFSGTKIKWILDNVEGAREDAEAGKLLFGTVDTWLVWKMTQGRVHVTDYTNASRTMVFNINTLQWDEKLLKELDIPLSMMPEVKSSSEVYGETNIGGKGGTRIPIAGIAGDQQAALYGQMCVEQGQAKNTYGTGCFLLMNTGKEKVTSRNGLLTTLACGPRGEASYALEGAVFMGGASIQWLRDEMKLLADAKDSEYFATKVDTSNGVYVVPAFTGLGAPYWDAYARGTIVGLTRGCGSNHIIRATLESIAYQTRDVIDAMQADSGIKLSALRVDGGAVANNFLMQFQSDVLDVAVHRSKVTEVTALGAAYLAGLAVGFWNGLDELADKAVIDRSFEPHHDEEKRNQRYRGWKRAVKCAQSWAELHDEE.

Threonine 14 serves as a coordination point for ADP. Residues threonine 14, threonine 15, and serine 16 each coordinate ATP. Threonine 14 serves as a coordination point for sn-glycerol 3-phosphate. Residue arginine 18 coordinates ADP. Residues arginine 84, glutamate 85, tyrosine 136, and aspartate 246 each coordinate sn-glycerol 3-phosphate. Positions 84, 85, 136, 246, and 247 each coordinate glycerol. Residues threonine 268 and glycine 311 each contribute to the ADP site. Residues threonine 268, glycine 311, glutamine 315, and glycine 412 each contribute to the ATP site. Residues glycine 412 and asparagine 416 each contribute to the ADP site.

Belongs to the FGGY kinase family.

It catalyses the reaction glycerol + ATP = sn-glycerol 3-phosphate + ADP + H(+). Its pathway is polyol metabolism; glycerol degradation via glycerol kinase pathway; sn-glycerol 3-phosphate from glycerol: step 1/1. Inhibited by fructose 1,6-bisphosphate (FBP). Its function is as follows. Key enzyme in the regulation of glycerol uptake and metabolism. Catalyzes the phosphorylation of glycerol to yield sn-glycerol 3-phosphate. The sequence is that of Glycerol kinase from Aliivibrio fischeri (strain MJ11) (Vibrio fischeri).